The sequence spans 728 residues: Catalase-peroxidase 1 (728 aa).

Positions 91–218 (WHSAGTYRTA…LAAVQMGLIY (128 aa)) form a cross-link, tryptophyl-tyrosyl-methioninium (Trp-Tyr) (with M-244). Residue H92 is the Proton acceptor of the active site. Residues 218-244 (YVNPEGPDGNPDPVAAAHDIRETFARM) constitute a cross-link (tryptophyl-tyrosyl-methioninium (Tyr-Met) (with W-91)). Residue H259 participates in heme b binding.

This sequence belongs to the peroxidase family. Peroxidase/catalase subfamily. As to quaternary structure, homodimer or homotetramer. Heme b serves as cofactor. In terms of processing, formation of the three residue Trp-Tyr-Met cross-link is important for the catalase, but not the peroxidase activity of the enzyme.

The enzyme catalyses H2O2 + AH2 = A + 2 H2O. It catalyses the reaction 2 H2O2 = O2 + 2 H2O. Its function is as follows. Bifunctional enzyme with both catalase and broad-spectrum peroxidase activity. The polypeptide is Catalase-peroxidase 1 (Burkholderia orbicola (strain MC0-3)).